Here is a 164-residue protein sequence, read N- to C-terminus: Phosphopantetheine adenylyltransferase (164 aa).

Ser10 is a substrate binding site. Residues 10–11 (SF) and His18 each bind ATP. Substrate is bound by residues Lys42, Leu74, and Arg88. ATP-binding positions include 89–91 (GLR), Glu99, and 124–130 (YAFLSSS).

The protein belongs to the bacterial CoaD family. Homohexamer. Mg(2+) serves as cofactor.

The protein resides in the cytoplasm. It carries out the reaction (R)-4'-phosphopantetheine + ATP + H(+) = 3'-dephospho-CoA + diphosphate. The protein operates within cofactor biosynthesis; coenzyme A biosynthesis; CoA from (R)-pantothenate: step 4/5. Reversibly transfers an adenylyl group from ATP to 4'-phosphopantetheine, yielding dephospho-CoA (dPCoA) and pyrophosphate. The protein is Phosphopantetheine adenylyltransferase of Geobacillus thermodenitrificans (strain NG80-2).